The chain runs to 71 residues: NAD(P)H-quinone oxidoreductase subunit O (71 aa).

Belongs to the complex I NdhO subunit family. As to quaternary structure, NDH-1 can be composed of about 15 different subunits; different subcomplexes with different compositions have been identified which probably have different functions.

The protein localises to the cellular thylakoid membrane. It catalyses the reaction a plastoquinone + NADH + (n+1) H(+)(in) = a plastoquinol + NAD(+) + n H(+)(out). The enzyme catalyses a plastoquinone + NADPH + (n+1) H(+)(in) = a plastoquinol + NADP(+) + n H(+)(out). NDH-1 shuttles electrons from an unknown electron donor, via FMN and iron-sulfur (Fe-S) centers, to quinones in the respiratory and/or the photosynthetic chain. The immediate electron acceptor for the enzyme in this species is believed to be plastoquinone. Couples the redox reaction to proton translocation, and thus conserves the redox energy in a proton gradient. Cyanobacterial NDH-1 also plays a role in inorganic carbon-concentration. This chain is NAD(P)H-quinone oxidoreductase subunit O, found in Microcystis aeruginosa (strain NIES-843 / IAM M-2473).